Here is a 968-residue protein sequence, read N- to C-terminus: RNA polymerase-associated protein RapA (968 aa).

A Helicase ATP-binding domain is found at 163–332 (EVGRRFAPRV…FARLRLLDPD (170 aa)). 176 to 183 (DEVGLGKT) serves as a coordination point for ATP. The DEAH box motif lies at 278–281 (DEAH). Residues 491–641 (RVDWLINFLK…AFEQTCPSGH (151 aa)) enclose the Helicase C-terminal domain.

This sequence belongs to the SNF2/RAD54 helicase family. RapA subfamily. As to quaternary structure, interacts with the RNAP. Has a higher affinity for the core RNAP than for the holoenzyme. Its ATPase activity is stimulated by binding to RNAP.

In terms of biological role, transcription regulator that activates transcription by stimulating RNA polymerase (RNAP) recycling in case of stress conditions such as supercoiled DNA or high salt concentrations. Probably acts by releasing the RNAP, when it is trapped or immobilized on tightly supercoiled DNA. Does not activate transcription on linear DNA. Probably not involved in DNA repair. The protein is RNA polymerase-associated protein RapA of Shewanella sediminis (strain HAW-EB3).